We begin with the raw amino-acid sequence, 676 residues long: Kojibiose hydrolase (676 aa).

The signal sequence occupies residues 1-20; sequence MNKGIIQLLALSLFCISVKA. Catalysis depends on glutamate 469, which acts as the Proton donor. Glutamate 613 acts as the Proton acceptor in catalysis.

The protein belongs to the glycosyl hydrolase 65 family.

The catalysed reaction is kojibiose + H2O = beta-D-glucose + D-glucose. Functionally, glycosidase that specifically hydrolyzes kojibiose to beta-glucose and glucose. Besides its activity on kojibiose, is also able to act on alpha-1,2-oligoglucans with a higher degree of polymerization. Shows weak activity on nigerose, but is not capable of breaking down trehalose, maltose, isomaltose, sucrose, isomaltulose, turanose or melezitose. This chain is Kojibiose hydrolase, found in Mucilaginibacter mallensis.